A 521-amino-acid chain; its full sequence is Probable cytochrome P450 12d1 distal, mitochondrial (521 aa).

The N-terminal 19 residues, 1 to 19 (MNTLSSARSVAIYVGPVRS), are a transit peptide targeting the mitochondrion. C467 contributes to the heme binding site.

It belongs to the cytochrome P450 family. Heme is required as a cofactor.

It is found in the mitochondrion membrane. In Drosophila melanogaster (Fruit fly), this protein is Probable cytochrome P450 12d1 distal, mitochondrial.